A 357-amino-acid chain; its full sequence is Peptide chain release factor 1 (357 aa).

Glutamine 234 carries the N5-methylglutamine modification.

It belongs to the prokaryotic/mitochondrial release factor family. Methylated by PrmC. Methylation increases the termination efficiency of RF1.

Its subcellular location is the cytoplasm. Its function is as follows. Peptide chain release factor 1 directs the termination of translation in response to the peptide chain termination codons UAG and UAA. The sequence is that of Peptide chain release factor 1 from Chlorobaculum tepidum (strain ATCC 49652 / DSM 12025 / NBRC 103806 / TLS) (Chlorobium tepidum).